Reading from the N-terminus, the 138-residue chain is Small ribosomal subunit protein uS12 (138 aa).

Over residues 1-22 (MPTINQLVRQGRKSISTKSDSP) the composition is skewed to polar residues. Positions 1–45 (MPTINQLVRQGRKSISTKSDSPALNFGYNSKKKSLTNNPAPQKRG) are disordered. D102 is modified (3-methylthioaspartic acid).

It belongs to the universal ribosomal protein uS12 family. In terms of assembly, part of the 30S ribosomal subunit. Contacts proteins S8 and S17. May interact with IF1 in the 30S initiation complex.

Functionally, with S4 and S5 plays an important role in translational accuracy. Interacts with and stabilizes bases of the 16S rRNA that are involved in tRNA selection in the A site and with the mRNA backbone. Located at the interface of the 30S and 50S subunits, it traverses the body of the 30S subunit contacting proteins on the other side and probably holding the rRNA structure together. The combined cluster of proteins S8, S12 and S17 appears to hold together the shoulder and platform of the 30S subunit. The protein is Small ribosomal subunit protein uS12 of Lacticaseibacillus paracasei (strain ATCC 334 / BCRC 17002 / CCUG 31169 / CIP 107868 / KCTC 3260 / NRRL B-441) (Lactobacillus paracasei).